Here is a 627-residue protein sequence, read N- to C-terminus: Protein fem-1 homolog B (627 aa).

6 ANK repeats span residues 45–74, 87–116, 120–149, 153–182, 186–215, and 218–248; these read QRST…VQTQ, DGAT…NVNH, TNST…NISI, YDNT…DPNA, CGAT…AMMV, and HGMT…NRRS. Residues 344 to 377 form a TPR repeat; it reads SHPIIYRGAVYADNMEFEQCIKLWLHALHLRQKG. ANK repeat units follow at residues 483–527 and 531–568; these read DGST…DVNA and EGNS…HTDM.

Belongs to the fem-1 family. As to quaternary structure, component of a CRL2 E3 ubiquitin-protein ligase complex, also named ECS (Elongin BC-CUL2/5-SOCS-box protein) complex.

The protein resides in the cytoplasm. It localises to the nucleus. The protein operates within protein modification; protein ubiquitination. Functionally, substrate-recognition component of a Cul2-RING (CRL2) E3 ubiquitin-protein ligase complex of the DesCEND (destruction via C-end degrons) pathway, which recognizes a C-degron located at the extreme C terminus of target proteins, leading to their ubiquitination and degradation. The C-degron recognized by the DesCEND pathway is usually a motif of less than ten residues and can be present in full-length proteins, truncated proteins or proteolytically cleaved forms. The CRL2(FEM1B) complex specifically recognizes proteins ending with -Gly-Leu-Asp-Arg, leading to their ubiquitination and degradation. In Gallus gallus (Chicken), this protein is Protein fem-1 homolog B.